Here is a 1021-residue protein sequence, read N- to C-terminus: Ankyrin repeat- and BTB/POZ domain-containing protein 3-A (1021 aa).

Residues 160-180 (MVLSWTISVNCITAALSALSL) traverse the membrane as a helical segment. ANK repeat units lie at residues 515–544 (QGMT…DINS), 561–590 (RQGT…NVEG), 599–628 (YTET…DPLI), and 642–671 (GEMN…KDKG). A BTB domain is found at 836 to 902 (SDVTFLVEGK…LYCGGTESLH (67 aa)).

Its subcellular location is the membrane. The protein is Ankyrin repeat- and BTB/POZ domain-containing protein 3-A (abtb3a) of Danio rerio (Zebrafish).